The following is a 624-amino-acid chain: Kelch-like ECH-associated protein 1 (624 aa).

Positions 1–27 are disordered; sequence MQPEPRPSGAGAHTQFLPLRSQRPEGA. The residue at position 38 (Cys-38) is an S-(2-succinyl)cysteine. The BTB domain maps to 77-149; the sequence is CDVTLQVKYE…AYTASISMGE (73 aa). An N5-[4-(S-L-cysteinyl)-5-methyl-1H-imidazol-2-yl]-L-ornithine (Arg-Cys) (interchain with C-151 in KEAP1) cross-link involves residue Arg-135. S-(2-succinyl)cysteine occurs at positions 151 and 241. Cys-151 bears the S-(2,3-dicarboxypropyl)cysteine; alternate mark. Cys-151 carries the post-translational modification S-nitrosocysteine; alternate. Cys-151 is covalently cross-linked (N5-[4-(S-L-cysteinyl)-5-methyl-1H-imidazol-2-yl]-L-ornithine (Cys-Arg) (interchain with R-135 in KEAP1)). Residues 184 to 286 form the BACK domain; sequence AIGIANFAEQ…TPHFLQMQLQ (103 aa). An S-(2,3-dicarboxypropyl)cysteine mark is found at Cys-257 and Cys-273. An S-(2-succinyl)cysteine mark is found at Cys-288 and Cys-319. S-(2,3-dicarboxypropyl)cysteine; alternate is present on Cys-288. Kelch repeat units lie at residues 327–372, 373–423, 424–470, 471–517, 519–564, and 565–611; these read LIYT…VVGG, LLYA…VIDG, HIYA…VLNR, LLYA…VLHN, IYAA…VHQG, and RIYV…VTME. Cys-434 is subject to S-cGMP-cysteine. An S-(2-succinyl)cysteine modification is found at Cys-613.

The protein belongs to the KEAP1 family. As to quaternary structure, component of the BCR(KEAP1) E3 ubiquitin ligase complex, at least composed of 2 molecules of CUL3, 2 molecules of KEAP1, and RBX1. Interacts with NFE2L2/NRF2; the interaction is direct. Forms a ternary complex with NFE2L2/NRF2 and PGAM5. Interacts with (phosphorylated) SQSTM1/p62; the interaction is direct and inactivates the BCR(KEAP1) complex by sequestering it in inclusion bodies, promoting its degradation. Interacts with NFE2L1. Interacts with BPTF and PTMA. Interacts with MAP1LC3B. Interacts indirectly with ENC1. Interacts with SESN1 and SESN2. Interacts with HSP90AA1 and HSP90AB1. Interacts with PGCKA1; this interaction prevents the ubiquitination of KEAP1 by TRIM25, thus protecting KEAP1 protein from degradation. Post-translationally, non-enzymatic covalent modifications of reactive cysteines by electrophile metabolites inactivate the BCR(KEAP1) complex. Accumulation of fumarate promotes the formation of cysteine S-succination (S-(2-succinyl)cysteine), leading to inactivate the BCR(KEAP1) complex and promote NFE2L2/NRF2 nuclear accumulation and activation. Nitric oxide-dependent 8-Nitro-cGMP formation promotes cysteine guanylation (S-cGMP-cysteine), leading to NFE2L2/NRF2 nuclear accumulation and activation. Itaconate, an anti-inflammatory metabolite generated in response to lipopolysaccharide, alkylates cysteines, activating NFE2L2/NRF2. Methylglyoxal, a reactive metabolite that accumulates when the glycolytic enzyme PGK1 is inhibited, promotes formation of a methylimidazole cross-link between proximal Cys-151 and Arg-135 on another KEAP1 molecule, resulting in an inactive dimer that inactivates the BCR(KEAP1) complex. In terms of processing, degraded via a proteasomal-independent process during selective autophagy: interaction with phosphorylated SQSTM1/p62 sequesters KEAP1 in inclusion bodies, leading to its degradation. Auto-ubiquitinated by the BCR(KEAP1) complex. Quinone-induced oxidative stress, but not sulforaphane, increases its ubiquitination. Ubiquitination and subsequent degradation is most pronounced following prolonged exposure of cells to oxidative stress, particularly in glutathione-deficient cells that are highly susceptible to oxidative stress. Deubiquitinated by USP25; leading to stabilization. Ubiquitinated by TRIM25; leading to degradation upon ER stress.

It is found in the cytoplasm. The protein resides in the nucleus. It functions in the pathway protein modification; protein ubiquitination. Ubiquitin ligase activity of the BCR(KEAP1) complex is inhibited by oxidative stress and electrophile metabolites such as sulforaphane. Electrophile metabolites react with reactive cysteine residues in KEAP1 and trigger non-enzymatic covalent modifications of these cysteine residues, leading to inactivate the ubiquitin ligase activity of the BCR(KEAP1) complex. Selective autophagy also inactivates the BCR(KEAP1) complex via interaction between KEAP1 and SQSTM1/p62, which sequesters the complex in inclusion bodies and promotes its degradation. Its function is as follows. Substrate-specific adapter of a BCR (BTB-CUL3-RBX1) E3 ubiquitin ligase complex that regulates the response to oxidative stress by targeting NFE2L2/NRF2 for ubiquitination. KEAP1 acts as a key sensor of oxidative and electrophilic stress: in normal conditions, the BCR(KEAP1) complex mediates ubiquitination and degradation of NFE2L2/NRF2, a transcription factor regulating expression of many cytoprotective genes. In response to oxidative stress, different electrophile metabolites trigger non-enzymatic covalent modifications of highly reactive cysteine residues in KEAP1, leading to inactivate the ubiquitin ligase activity of the BCR(KEAP1) complex, promoting NFE2L2/NRF2 nuclear accumulation and expression of phase II detoxifying enzymes. In response to selective autophagy, KEAP1 is sequestered in inclusion bodies following its interaction with SQSTM1/p62, leading to inactivation of the BCR(KEAP1) complex and activation of NFE2L2/NRF2. The BCR(KEAP1) complex also mediates ubiquitination of SQSTM1/p62, increasing SQSTM1/p62 sequestering activity and degradation. The BCR(KEAP1) complex also targets BPTF and PGAM5 for ubiquitination and degradation by the proteasome. This chain is Kelch-like ECH-associated protein 1, found in Sus scrofa (Pig).